Consider the following 200-residue polypeptide: MKSLHTICLLFIFVARGNSRSCDFCHNIGKDCDGYEQECSSPEDVCGKVFLEISSASLSVRTVHKNCFSSSICKLGQIDVNIGHHSYIRGRVNCCEKEPCEDQPFPGLPLSRPNGYYCPGALGLFTEDSTEYEAICHGTETKCINIVGHRYENFPGDITYNLKGCVSSCPLLSLSNATREENRNYLQKVECKDAIRLASL.

The N-terminal stretch at 1–19 (MKSLHTICLLFIFVARGNS) is a signal peptide. Intrachain disulfides connect Cys-22–Cys-46, Cys-25–Cys-32, Cys-39–Cys-67, Cys-73–Cys-94, Cys-95–Cys-100, Cys-118–Cys-143, Cys-136–Cys-165, and Cys-169–Cys-191. An N-linked (GlcNAc...) asparagine glycan is attached at Asn-176.

This sequence belongs to the CNF-like-inhibitor family. Occurs as a mixture of oligomers. Tetrameric arrangement appears to be the predominant quaternary structure. In terms of tissue distribution, expressed by the liver.

It is found in the secreted. Inhibits the enzymatic activity of phospholipase A2 (PA2). The sequence is that of Phospholipase A2 inhibitor LNF2 from Lachesis muta muta (Bushmaster).